The chain runs to 301 residues: Probable alpha-L-glutamate ligase (301 aa).

The region spanning 104–287 (LQLLSRRGIG…VAGMIIEHLE (184 aa)) is the ATP-grasp domain. Residues K141, 178–179 (EY), D187, and 211–213 (RSN) contribute to the ATP site. The Mg(2+) site is built by D248, E260, and N262. Mn(2+) contacts are provided by D248, E260, and N262.

The protein belongs to the RimK family. Requires Mg(2+) as cofactor. It depends on Mn(2+) as a cofactor.

In Pseudomonas entomophila (strain L48), this protein is Probable alpha-L-glutamate ligase.